The following is a 570-amino-acid chain: Formate--tetrahydrofolate ligase (570 aa).

65–72 (TPHGEGKT) lines the ATP pocket.

The protein belongs to the formate--tetrahydrofolate ligase family.

It carries out the reaction (6S)-5,6,7,8-tetrahydrofolate + formate + ATP = (6R)-10-formyltetrahydrofolate + ADP + phosphate. It functions in the pathway one-carbon metabolism; tetrahydrofolate interconversion. This is Formate--tetrahydrofolate ligase from Shewanella oneidensis (strain ATCC 700550 / JCM 31522 / CIP 106686 / LMG 19005 / NCIMB 14063 / MR-1).